The sequence spans 470 residues: Probable glycosyltransferase At3g07620 (470 aa).

The Cytoplasmic portion of the chain corresponds to 1-7 (MRDYIPK). Residues 8 to 28 (YLNAFLLAFATFAVGFAIFIA) traverse the membrane as a helical; Signal-anchor segment. Residues 29 to 470 (KDSNSSSHLY…WLRRLNVKLL (442 aa)) lie on the Lumenal side of the membrane. Asparagine 32, asparagine 73, asparagine 105, asparagine 236, asparagine 274, and asparagine 299 each carry an N-linked (GlcNAc...) asparagine glycan.

It belongs to the glycosyltransferase 47 family.

It localises to the golgi apparatus membrane. Functionally, may be involved in cell wall biosynthesis. The polypeptide is Probable glycosyltransferase At3g07620 (Arabidopsis thaliana (Mouse-ear cress)).